The following is a 212-amino-acid chain: Ion-translocating oxidoreductase complex subunit G (212 aa).

A helical membrane pass occupies residues 9-29 (GFLLALFALICTGLVAAVNQQ). Position 176 is an FMN phosphoryl threonine (Thr176).

The protein belongs to the RnfG family. In terms of assembly, the complex is composed of six subunits: RnfA, RnfB, RnfC, RnfD, RnfE and RnfG. The cofactor is FMN.

It is found in the cell inner membrane. Functionally, part of a membrane-bound complex that couples electron transfer with translocation of ions across the membrane. The chain is Ion-translocating oxidoreductase complex subunit G from Shewanella baltica (strain OS223).